The primary structure comprises 841 residues: Microcephalin (841 aa).

Residues 1 to 93 enclose the BRCT 1 domain; sequence MAAPILKDVV…AHIDESLFPA (93 aa). Phosphoserine occurs at positions 278, 286, 295, and 332. Phosphothreonine is present on T334. Disordered regions lie at residues 340–375, 417–445, 481–507, and 562–593; these read GHLLIHSRPRSSSVKRKRVSYGFHSPPKEKCKRKRS, PDNLKERNSENLPPESQLPSSPAQFSCRS, SSPQKTANGEGRATLSGVTSEESSAPE, and VGLKSTQDKGTTSKISNSSEGEASSEHEPRSV. The span at 342 to 358 shows a compositional bias: basic residues; it reads LLIHSRPRSSSVKRKRV. Polar residues predominate over residues 433-445; it reads QLPSSPAQFSCRS. Residues 565-583 show a composition bias toward polar residues; the sequence is KSTQDKGTTSKISNSSEGE. 2 consecutive BRCT domains span residues 646–736 and 757–839; these read SGKG…SFEL and YRGT…NYLL.

Interacts with CDC27 and maybe other components of the APC/C complex. Interacts with histone variant H2AX under DNA damage conditions.

It localises to the cytoplasm. Its subcellular location is the cytoskeleton. It is found in the microtubule organizing center. The protein localises to the centrosome. In terms of biological role, implicated in chromosome condensation and DNA damage induced cellular responses. May play a role in neurogenesis and regulation of the size of the cerebral cortex. The protein is Microcephalin of Colobus guereza (Mantled guereza).